Here is a 389-residue protein sequence, read N- to C-terminus: uncharacterized protein (389 aa).

The signal sequence occupies residues 1-29; it reads MQPSFTPSGGKWLSIAVILLVIGLVVGFA.

It belongs to the bacterial solute-binding protein 1 family. WtpA subfamily.

This is an uncharacterized protein from Thermoplasma volcanium (strain ATCC 51530 / DSM 4299 / JCM 9571 / NBRC 15438 / GSS1).